The primary structure comprises 36 residues: Photosystem I reaction center subunit VIII (36 aa).

A helical membrane pass occupies residues 6–28 (FPSVLVPLVGLVFPAMAMASLSL).

It belongs to the PsaI family.

It localises to the plastid. Its subcellular location is the chloroplast thylakoid membrane. In terms of biological role, may help in the organization of the PsaL subunit. In Panax ginseng (Korean ginseng), this protein is Photosystem I reaction center subunit VIII.